The chain runs to 280 residues: uncharacterized protein (280 aa).

This is an uncharacterized protein from Acanthamoeba polyphaga (Amoeba).